The primary structure comprises 465 residues: Cysteine--tRNA ligase (465 aa).

Cysteine 30 is a Zn(2+) binding site. The 'HIGH' region motif lies at isoleucine 32–histidine 42. Residues cysteine 214, histidine 239, and glutamate 243 each contribute to the Zn(2+) site. Positions lysine 271–serine 275 match the 'KMSKS' region motif. ATP is bound at residue lysine 274.

The protein belongs to the class-I aminoacyl-tRNA synthetase family. Monomer. It depends on Zn(2+) as a cofactor.

The protein localises to the cytoplasm. It catalyses the reaction tRNA(Cys) + L-cysteine + ATP = L-cysteinyl-tRNA(Cys) + AMP + diphosphate. The polypeptide is Cysteine--tRNA ligase (Burkholderia cenocepacia (strain HI2424)).